We begin with the raw amino-acid sequence, 100 residues long: NADH-quinone oxidoreductase subunit K (100 aa).

Helical transmembrane passes span 1–21 (MIGL…GLAG), 28–48 (ILLL…GFIA), and 64–84 (FIIA…ILWF).

This sequence belongs to the complex I subunit 4L family. As to quaternary structure, NDH-1 is composed of 14 different subunits. Subunits NuoA, H, J, K, L, M, N constitute the membrane sector of the complex.

It is found in the cell inner membrane. It carries out the reaction a quinone + NADH + 5 H(+)(in) = a quinol + NAD(+) + 4 H(+)(out). Its function is as follows. NDH-1 shuttles electrons from NADH, via FMN and iron-sulfur (Fe-S) centers, to quinones in the respiratory chain. The immediate electron acceptor for the enzyme in this species is believed to be ubiquinone. Couples the redox reaction to proton translocation (for every two electrons transferred, four hydrogen ions are translocated across the cytoplasmic membrane), and thus conserves the redox energy in a proton gradient. This chain is NADH-quinone oxidoreductase subunit K, found in Helicobacter acinonychis (strain Sheeba).